A 455-amino-acid polypeptide reads, in one-letter code: Serine--tRNA ligase (455 aa).

252-254 (TAE) provides a ligand contact to L-serine. ATP is bound by residues 283-285 (RKE) and Val299. L-serine is bound at residue Glu306. 370-373 (EVVS) contacts ATP. Thr406 is a binding site for L-serine.

Belongs to the class-II aminoacyl-tRNA synthetase family. Type-1 seryl-tRNA synthetase subfamily. Homodimer. The tRNA molecule binds across the dimer.

It localises to the cytoplasm. The enzyme catalyses tRNA(Ser) + L-serine + ATP = L-seryl-tRNA(Ser) + AMP + diphosphate + H(+). It catalyses the reaction tRNA(Sec) + L-serine + ATP = L-seryl-tRNA(Sec) + AMP + diphosphate + H(+). Its pathway is aminoacyl-tRNA biosynthesis; selenocysteinyl-tRNA(Sec) biosynthesis; L-seryl-tRNA(Sec) from L-serine and tRNA(Sec): step 1/1. In terms of biological role, catalyzes the attachment of serine to tRNA(Ser). Is also able to aminoacylate tRNA(Sec) with serine, to form the misacylated tRNA L-seryl-tRNA(Sec), which will be further converted into selenocysteinyl-tRNA(Sec). The protein is Serine--tRNA ligase of Pyrococcus horikoshii (strain ATCC 700860 / DSM 12428 / JCM 9974 / NBRC 100139 / OT-3).